Reading from the N-terminus, the 1119-residue chain is Solute carrier family 38 member 10 (1119 aa).

Helical transmembrane passes span 4–24 (AAAS…GVSV), 36–58 (IVLG…MFLV), 84–104 (LVET…YVVI), 120–140 (VGGT…VLPL), 153–173 (FSAM…LSSL), 229–249 (IFAS…FFGY), 272–292 (MLRV…ILPC), 323–343 (ALTL…PNVE), 345–365 (ILGL…PALI), and 378–398 (VVLW…LSVS). 2 disordered regions span residues 438-691 (AEDG…EEAG) and 731-1071 (KEIH…DGVI). Composition is skewed to basic and acidic residues over residues 439-454 (EDGR…REEL), 466-475 (PGREDGKEAP), 493-522 (EAHR…ENKP), 544-559 (DSER…EVGK), and 592-603 (AKEDLGPGDRGL). A Phosphoserine modification is found at S612. Pro residues predominate over residues 652–667 (PPLPAEKPAPGPGLPP). Basic and acidic residues-rich tracts occupy residues 668 to 677 (EPREQRDVER), 731 to 752 (KEIH…EVHQ), and 763 to 773 (EAPEGKARETV). The residue at position 772 (T772) is a Phosphothreonine. The residue at position 802 (S802) is a Phosphoserine. Basic and acidic residues-rich tracts occupy residues 832-841 (KLRDGQKDAA) and 863-876 (PARE…RLAE). Over residues 880-889 (GQSQDVTGGS) the composition is skewed to polar residues. Phosphoserine is present on residues S889, S965, and S997. Basic and acidic residues-rich tracts occupy residues 975-1005 (HRLD…RGGE), 1012-1022 (PRQRPEPELGL), and 1033-1042 (DNAKPNRDLK).

Belongs to the amino acid/polyamine transporter 2 family.

The protein localises to the membrane. It catalyses the reaction L-glutamate(out) = L-glutamate(in). The catalysed reaction is L-glutamine(out) = L-glutamine(in). It carries out the reaction L-alanine(in) = L-alanine(out). The enzyme catalyses L-serine(in) = L-serine(out). It catalyses the reaction L-leucine(in) = L-leucine(out). Functionally, facilitates bidirectional transport of amino acids. May act as a glutamate sensor that regulates glutamate-glutamine cycle and mTOR signaling in the brain. The transport mechanism remains to be elucidated. This Homo sapiens (Human) protein is Solute carrier family 38 member 10.